A 450-amino-acid chain; its full sequence is UPF0210 protein CPE1497 (450 aa).

Belongs to the UPF0210 family. Homodimer.

This chain is UPF0210 protein CPE1497, found in Clostridium perfringens (strain 13 / Type A).